We begin with the raw amino-acid sequence, 836 residues long: General vesicular transport factor p115 (836 aa).

Positions 1–22 are disordered; sequence MEFLKSGIKTVLGSTEPGQQPS. Positions 12–22 are enriched in polar residues; that stretch reads LGSTEPGQQPS. ARM repeat units lie at residues 24–64, 65–124, 126–166, 169–210, 211–256, 316–359, 368–413, 424–463, 477–518, 523–577, and 579–636; these read AETV…VGAQ, GMPP…IKTP, HVTL…LILV, MGVS…VAFE, NAFD…FKEG, RLLH…LGRV, PAIV…QTLL, STGQLLCTGLFSTDALANWFSAVALMHSLVENVALKEELL, TLLE…KALL, TMAY…IIKR, and GQES…LVSG. 2 coiled-coil regions span residues 663–707 and 744–806; these read IIRG…DQNT and NMYF…EEAG. The tract at residues 803 to 836 is disordered; the sequence is EEAGSTNTLPTSNVAPSVPAAGGGSPIPSGTASR. Polar residues predominate over residues 806 to 816; that stretch reads GSTNTLPTSNV. Over residues 817 to 836 the composition is skewed to low complexity; that stretch reads APSVPAAGGGSPIPSGTASR.

Belongs to the VDP/USO1/EDE1 family.

The protein resides in the cytoplasm. The protein localises to the golgi apparatus. It is found in the golgi stack. Its subcellular location is the golgi stack membrane. It localises to the endoplasmic reticulum. The protein resides in the endoplasmic reticulum membrane. Its function is as follows. Essential for maintaining the architecture of the Golgi stacks and for normal organization of the transitional endoplasmic reticulum (tER). Required for both the formation of the Golgi stacks and the maintenance of the individual cisternae. The sequence is that of General vesicular transport factor p115 from Drosophila melanogaster (Fruit fly).